A 297-amino-acid polypeptide reads, in one-letter code: Universal stress protein MT2698 (297 aa).

Residues G13, A43, G117–R123, R127, S131–V132, G165, D198, G262–G268, and S276–G278 contribute to the ATP site.

The protein belongs to the universal stress protein A family. In terms of assembly, homodimer.

In terms of biological role, may play a role in the establishment of a persistent infection (latency) in the host. This Mycobacterium tuberculosis (strain CDC 1551 / Oshkosh) protein is Universal stress protein MT2698.